The sequence spans 196 residues: ATP-dependent Clp protease proteolytic subunit (196 aa).

Residue serine 97 is the Nucleophile of the active site. Histidine 122 is an active-site residue.

It belongs to the peptidase S14 family. As to quaternary structure, fourteen ClpP subunits assemble into 2 heptameric rings which stack back to back to give a disk-like structure with a central cavity, resembling the structure of eukaryotic proteasomes.

Its subcellular location is the cytoplasm. The catalysed reaction is Hydrolysis of proteins to small peptides in the presence of ATP and magnesium. alpha-casein is the usual test substrate. In the absence of ATP, only oligopeptides shorter than five residues are hydrolyzed (such as succinyl-Leu-Tyr-|-NHMec, and Leu-Tyr-Leu-|-Tyr-Trp, in which cleavage of the -Tyr-|-Leu- and -Tyr-|-Trp bonds also occurs).. Cleaves peptides in various proteins in a process that requires ATP hydrolysis. Has a chymotrypsin-like activity. Plays a major role in the degradation of misfolded proteins. This is ATP-dependent Clp protease proteolytic subunit from Lacticaseibacillus paracasei (strain ATCC 334 / BCRC 17002 / CCUG 31169 / CIP 107868 / KCTC 3260 / NRRL B-441) (Lactobacillus paracasei).